The sequence spans 579 residues: MFS-type transporter sphD (579 aa).

Residues 17 to 62 (SAFAVRAEPDSEPVSEKQGTAETDAETGAGGTEVPAERNGEDDVER) form a disordered region. The segment covering 51-62 (PAERNGEDDVER) has biased composition (basic and acidic residues). The next 8 membrane-spanning stretches (helical) occupy residues 73–93 (AFIG…ALGI), 110–130 (FWAN…WASI), 138–158 (PPLY…AVAQ), 168–188 (VLQG…LADM), 200–220 (LMAI…ALFA), 227–247 (WIGW…FFFL), 267–287 (WIGM…LSWA), and 294–314 (GAWQ…IFAF). The N-linked (GlcNAc...) asparagine glycan is linked to Asn335. Helical transmembrane passes span 338–358 (LVGG…LPLI), 367–391 (AILS…SMML), 398–419 (YVWI…LALF), 429–449 (LGLP…LLPM), 460–480 (GLAI…GLTI), and 541–561 (FQTI…TSLF).

The protein belongs to the major facilitator superfamily.

It localises to the membrane. Its function is as follows. MFS-type transporter; part of the gene cluster that mediates the biosynthesis of sphingofungins, bioactive molecules acting as sphingolipid inhibitors via inhibiting serine palmitoyl transferase (SPT). The polypeptide is MFS-type transporter sphD (Aspergillus fumigatus (strain CBS 144.89 / FGSC A1163 / CEA10) (Neosartorya fumigata)).